A 623-amino-acid chain; its full sequence is Heterogeneous nuclear ribonucleoprotein Q (623 aa).

Ala-2 carries the post-translational modification N-acetylalanine. Ser-159 is subject to Phosphoserine. 3 RRM domains span residues 162 to 241, 243 to 325, and 338 to 408; these read TEIF…ISVA, NRLF…WADP, and KVLF…FAKP. Lys-168 participates in a covalent cross-link: Glycyl lysine isopeptide (Lys-Gly) (interchain with G-Cter in SUMO2). Lys-221 carries the post-translational modification N6-acetyllysine. At Lys-363 the chain carries N6-acetyllysine. The residue at position 373 (Tyr-373) is a Phosphotyrosine. The tract at residues 400–561 is interaction with APOBEC1; it reads NIEIVFAKPP…GARGGRGGNV (162 aa). Arg-444 carries the post-translational modification Asymmetric dimethylarginine; by PRMT1; alternate. Position 444 is an omega-N-methylarginine; by PRMT1; alternate (Arg-444). Tandem repeats lie at residues 448–450, 451–453, 460–464, 469–472, 478–480, and 485–488. The tract at residues 448–559 is 8 X 3 AA repeats of R-G-G; sequence RGGRGGYGYP…VRGARGGRGG (112 aa). The tract at residues 460–488 is 3 X 4 AA repeats of Y-Y-G-Y; that stretch reads YYGYEDYYDYYGYDYHNYRGGYEDPYYGY. Arg-496 is subject to Omega-N-methylarginine; by PRMT1. Positions 497 to 623 are disordered; it reads GRGGRGARGA…YQDTFGQQWK (127 aa). A 1-4 repeat occupies 498 to 500; it reads RGG. A compositionally biased stretch (low complexity) spans 504-522; sequence RGAAPSRGRGAAPPRGRAG. Position 510 is an asymmetric dimethylarginine; by PRMT1 (Arg-510). Residues Arg-518, Arg-526, Arg-536, and Arg-539 each carry the asymmetric dimethylarginine; by PRMT1; alternate modification. 4 positions are modified to omega-N-methylarginine; by PRMT1; alternate: Arg-518, Arg-526, Arg-536, and Arg-539. The segment at 518–549 is interaction with SMN; the sequence is RGRAGYSQRGGPGSARGVRGARGGAQQQRGRG. One copy of the 1-5 repeat lies at 526-528; the sequence is RGG. Tandem repeats lie at residues 539–541, 554–556, and 557–559. The span at 550–562 shows a compositional bias: gly residues; it reads VRGARGGRGGNVG. Residues 564-578 carry the Bipartite nuclear localization signal motif; that stretch reads KRKADGYNQPDSKRR. The span at 580 to 595 shows a compositional bias: polar residues; that stretch reads TNNQNWGSQPIAQQPL. A Phosphoserine modification is found at Ser-587. Lys-607 is covalently cross-linked (Glycyl lysine isopeptide (Lys-Gly) (interchain with G-Cter in SUMO2)). The span at 611 to 623 shows a compositional bias: polar residues; the sequence is QEFYQDTFGQQWK.

Isoform 1 is a component of the APOB mRNA editosome complex and interacts with APOBEC1 and A1CF (APOBEC1 complementation factor). Part of a complex associated with the FOS mCRD domain and consisting of PABPC1, PAIP1, CSDE1/UNR, HNRPD and SYNCRIP. Isoform 3 interacts with HNRPR. Interacts with POLR2A hyperphosphorylated C-terminal domain. Isoform 1, isoform 2 and isoform 3 interact with SMN. Isoform 3 interacts through its C-terminal domain with SYT7, SYT8 and SYT9. The non-phosphorylated and phosphorylated forms are colocalized with PAIP1 in polysomes. Interacts with HABP4. Identified in a histone pre-mRNA complex, at least composed of ERI1, LSM11, SLBP, SNRPB, SYNCRIP and YBX1. Identified in the spliceosome C complex. Component of the coding region determinant (CRD)-mediated complex, composed of DHX9, HNRNPU, IGF2BP1, SYNCRIP and YBX1. Identified in a mRNP complex, at least composed of DHX9, DDX3X, ELAVL1, HNRNPU, IGF2BP1, ILF3, PABPC1, PCBP2, PTBP2, STAU1, STAU2, SYNCRIP and YBX1. Identified in a mRNP granule complex, at least composed of ACTB, ACTN4, DHX9, ERG, HNRNPA1, HNRNPA2B1, HNRNPAB, HNRNPD, HNRNPL, HNRNPR, HNRNPU, HSPA1, HSPA8, IGF2BP1, ILF2, ILF3, NCBP1, NCL, PABPC1, PABPC4, PABPN1, RPLP0, RPS3, RPS3A, RPS4X, RPS8, RPS9, SYNCRIP, YBX1 and untranslated mRNAs. Interacts with GTPBP1. Component of the GAIT complex; in humans the complex assembly seems to be a two-step process in which EPRS1 first associates with SYNCRIP to form a pre-GAIT complex which is deficient in GAIT element binding. As to quaternary structure, (Microbial infection) Interacts with minute virus of mice (MVM) NS1 protein. In terms of assembly, (Microbial infection) Interacts with herpes virus 8/HHV-8 protein vIRF-1; this interaction induces ubiquitination and degradation of SYNCRIP. Phosphorylated on tyrosine. The membrane-bound form found in microsomes is phosphorylated in vitro by insulin receptor tyrosine kinase (INSR). Phosphorylation is inhibited upon binding to RNA, whereas the cytoplasmic form is poorly phosphorylated. In terms of tissue distribution, ubiquitously expressed. Detected in heart, brain, pancreas, placenta, spleen, lung, liver, skeletal muscle, kidney, thymus, prostate, uterus, small intestine, colon, peripheral blood and testis.

The protein resides in the cytoplasm. It is found in the microsome. The protein localises to the endoplasmic reticulum. It localises to the nucleus. Its subcellular location is the nucleoplasm. Its function is as follows. Heterogenous nuclear ribonucleoprotein (hnRNP) implicated in mRNA processing mechanisms. Component of the CRD-mediated complex that promotes MYC mRNA stability. Isoform 1, isoform 2 and isoform 3 are associated in vitro with pre-mRNA, splicing intermediates and mature mRNA protein complexes. Isoform 1 binds to apoB mRNA AU-rich sequences. Isoform 1 is part of the APOB mRNA editosome complex and may modulate the postranscriptional C to U RNA-editing of the APOB mRNA through either by binding to A1CF (APOBEC1 complementation factor), to APOBEC1 or to RNA itself. May be involved in translationally coupled mRNA turnover. Implicated with other RNA-binding proteins in the cytoplasmic deadenylation/translational and decay interplay of the FOS mRNA mediated by the major coding-region determinant of instability (mCRD) domain. Interacts in vitro preferentially with poly(A) and poly(U) RNA sequences. Isoform 3 may be involved in cytoplasmic vesicle-based mRNA transport through interaction with synaptotagmins. Component of the GAIT (gamma interferon-activated inhibitor of translation) complex which mediates interferon-gamma-induced transcript-selective translation inhibition in inflammation processes. Upon interferon-gamma activation assembles into the GAIT complex which binds to stem loop-containing GAIT elements in the 3'-UTR of diverse inflammatory mRNAs (such as ceruplasmin) and suppresses their translation; seems not to be essential for GAIT complex function. The protein is Heterogeneous nuclear ribonucleoprotein Q (SYNCRIP) of Homo sapiens (Human).